Here is a 568-residue protein sequence, read N- to C-terminus: MTLRLSRRAYAEMFGPTTGDRVRLADTDLLIEIERDFTIYGEEVKFGGGKVIRDGMGQSQRVAAEVPDTVITNAVILDHWGIVKADIAIKHGRIAAIGKAGNPDIQPGVTIPIGAGTEVIAGEGLIVTAGGIDTHIHFISPQQIDEALASGVTTMLGGGTGPATGTNATTCTPGPWHMERMLQAADGWPINLGFLGKGNASRPEPLLEQIAAGAIGLKLHEDWGTTPAAIDTCLSIADDTDTQVAIHTDTLNEAGFVESTVAAFKGRTIHTYHTEGAGGGHAPDILKVCGEANVLPSSTNPTRPYTINTLEEHLDMLMVCHHLDPSIAEDLAFAESRIRRETIAAEDILHDLGALSMLSSDSQAMGRVGEVIIRTWQTAHKMKVQRGALPEDSARNDNFRAKRYVAKYTINPAITHGIAHQVGSIEPGKWADLVLWEPAFFGIKPTMILKGGMIALAQMGDPNASIPTPQPVHYREMFATRGGALARTSLTFVSQLAADAGIAERYGLAKPIVPVRNCRQVTKADMIHNAWRPAISVDPETYDVIADGQLLTCEPASVLPMAQRYFLF.

A Urease domain is found at 130–568 (GGIDTHIHFI…LPMAQRYFLF (439 aa)). Ni(2+) is bound by residues His-135, His-137, and Lys-218. Lys-218 bears the N6-carboxylysine mark. Substrate is bound at residue His-220. Positions 247 and 273 each coordinate Ni(2+). Residue His-321 is the Proton donor of the active site. Ni(2+) is bound at residue Asp-361.

It belongs to the metallo-dependent hydrolases superfamily. Urease alpha subunit family. In terms of assembly, heterotrimer of UreA (gamma), UreB (beta) and UreC (alpha) subunits. Three heterotrimers associate to form the active enzyme. Requires Ni cation as cofactor. In terms of processing, carboxylation allows a single lysine to coordinate two nickel ions.

Its subcellular location is the cytoplasm. The enzyme catalyses urea + 2 H2O + H(+) = hydrogencarbonate + 2 NH4(+). It functions in the pathway nitrogen metabolism; urea degradation; CO(2) and NH(3) from urea (urease route): step 1/1. The chain is Urease subunit alpha from Burkholderia multivorans (strain ATCC 17616 / 249).